The sequence spans 145 residues: Large ribosomal subunit protein uL11 (145 aa).

Belongs to the universal ribosomal protein uL11 family. Part of the ribosomal stalk of the 50S ribosomal subunit. Interacts with L10 and the large rRNA to form the base of the stalk. L10 forms an elongated spine to which L12 dimers bind in a sequential fashion forming a multimeric L10(L12)X complex. One or more lysine residues are methylated.

Functionally, forms part of the ribosomal stalk which helps the ribosome interact with GTP-bound translation factors. The protein is Large ribosomal subunit protein uL11 of Rickettsia africae (strain ESF-5).